We begin with the raw amino-acid sequence, 638 residues long: 1-deoxy-D-xylulose-5-phosphate synthase (638 aa).

Residues H72 and 113–115 each bind thiamine diphosphate; that span reads GHA. D144 is a Mg(2+) binding site. Residues 145–146, N174, Y289, and E372 contribute to the thiamine diphosphate site; that span reads GA. N174 contacts Mg(2+).

The protein belongs to the transketolase family. DXPS subfamily. In terms of assembly, homodimer. It depends on Mg(2+) as a cofactor. Thiamine diphosphate is required as a cofactor.

The catalysed reaction is D-glyceraldehyde 3-phosphate + pyruvate + H(+) = 1-deoxy-D-xylulose 5-phosphate + CO2. It functions in the pathway metabolic intermediate biosynthesis; 1-deoxy-D-xylulose 5-phosphate biosynthesis; 1-deoxy-D-xylulose 5-phosphate from D-glyceraldehyde 3-phosphate and pyruvate: step 1/1. Functionally, catalyzes the acyloin condensation reaction between C atoms 2 and 3 of pyruvate and glyceraldehyde 3-phosphate to yield 1-deoxy-D-xylulose-5-phosphate (DXP). This is 1-deoxy-D-xylulose-5-phosphate synthase from Gloeobacter violaceus (strain ATCC 29082 / PCC 7421).